The following is a 50-amino-acid chain: Defensin D2 (50 aa).

Intrachain disulfides connect C3-C50, C14-C35, C20-C44, and C24-C46.

Contains 4 disulfide bonds.

Its subcellular location is the secreted. Functionally, antimicrobial peptide active against fungi, Gram-positive and Gram-negative bacteria. Inhibits growth of hyphae in the fungi A.niger (IC(50)=3.5 ug/ml), B.sorokiniana (IC(50)=1.8 ug/ml), F.oxysporum (IC(50)=5.3 ug/ml), F.graminearum (IC(50)=6.9 ug/ml), F.culmorum (IC(50)=6.9 ug/ml) and B.cinerea (IC(50)=13.7 ug/ml). Has no effect on spore germination. Destroys spores in germinated conidia by disruption of cell walls and membranes in A.niger and B.sorokiniana. Causes vacuolization of germinated macro- and microconidia in F.oxysporum, F.graminearum and F.culmorum. Strongly inhibits growth of P.infestans on potato tubers above concentrations of 3.4 ug/ml. Inhibits growth of Gram-positive bacteria C.michiganensis and B.subtilis and of Gram-negative bacteria P.syringae, E.carotovora and E.coli. The sequence is that of Defensin D2 from Nigella sativa (Black cumin).